The chain runs to 363 residues: Ribosomal RNA large subunit methyltransferase M (363 aa).

S-adenosyl-L-methionine-binding positions include serine 194, 227–230, aspartate 246, aspartate 266, and aspartate 284; that span reads CPGG. Lysine 313 serves as the catalytic Proton acceptor.

This sequence belongs to the class I-like SAM-binding methyltransferase superfamily. RNA methyltransferase RlmE family. RlmM subfamily. Monomer.

It is found in the cytoplasm. The catalysed reaction is cytidine(2498) in 23S rRNA + S-adenosyl-L-methionine = 2'-O-methylcytidine(2498) in 23S rRNA + S-adenosyl-L-homocysteine + H(+). Its function is as follows. Catalyzes the 2'-O-methylation at nucleotide C2498 in 23S rRNA. This is Ribosomal RNA large subunit methyltransferase M from Haemophilus influenzae (strain PittEE).